A 508-amino-acid polypeptide reads, in one-letter code: Glycerol kinase (508 aa).

An ADP-binding site is contributed by T17. 3 residues coordinate ATP: T17, T18, and S19. Residue T17 coordinates sn-glycerol 3-phosphate. R21 is a binding site for ADP. R87, E88, Y139, and D256 together coordinate sn-glycerol 3-phosphate. Glycerol contacts are provided by R87, E88, Y139, D256, and Q257. T278 and G322 together coordinate ADP. ATP is bound by residues T278, G322, Q326, and A423. Positions 423 and 427 each coordinate ADP.

It belongs to the FGGY kinase family.

The catalysed reaction is glycerol + ATP = sn-glycerol 3-phosphate + ADP + H(+). It functions in the pathway polyol metabolism; glycerol degradation via glycerol kinase pathway; sn-glycerol 3-phosphate from glycerol: step 1/1. Inhibited by fructose 1,6-bisphosphate (FBP). Functionally, key enzyme in the regulation of glycerol uptake and metabolism. Catalyzes the phosphorylation of glycerol to yield sn-glycerol 3-phosphate. The chain is Glycerol kinase from Corynebacterium efficiens (strain DSM 44549 / YS-314 / AJ 12310 / JCM 11189 / NBRC 100395).